We begin with the raw amino-acid sequence, 425 residues long: Serine--tRNA ligase (425 aa).

231–233 (TAE) lines the L-serine pocket. 262–264 (RSE) contacts ATP. L-serine is bound at residue Glu-285. Residue 349–352 (EISS) coordinates ATP. Ser-385 is a binding site for L-serine.

This sequence belongs to the class-II aminoacyl-tRNA synthetase family. Type-1 seryl-tRNA synthetase subfamily. Homodimer. The tRNA molecule binds across the dimer.

Its subcellular location is the cytoplasm. It carries out the reaction tRNA(Ser) + L-serine + ATP = L-seryl-tRNA(Ser) + AMP + diphosphate + H(+). The enzyme catalyses tRNA(Sec) + L-serine + ATP = L-seryl-tRNA(Sec) + AMP + diphosphate + H(+). It participates in aminoacyl-tRNA biosynthesis; selenocysteinyl-tRNA(Sec) biosynthesis; L-seryl-tRNA(Sec) from L-serine and tRNA(Sec): step 1/1. Catalyzes the attachment of serine to tRNA(Ser). Is also able to aminoacylate tRNA(Sec) with serine, to form the misacylated tRNA L-seryl-tRNA(Sec), which will be further converted into selenocysteinyl-tRNA(Sec). This is Serine--tRNA ligase from Bartonella bacilliformis (strain ATCC 35685 / KC583 / Herrer 020/F12,63).